The primary structure comprises 369 residues: Flagellar P-ring protein (369 aa).

Residues 1-22 form the signal peptide; it reads MLNFKHLMAAALLLSTSLGVQA.

This sequence belongs to the FlgI family. As to quaternary structure, the basal body constitutes a major portion of the flagellar organelle and consists of four rings (L,P,S, and M) mounted on a central rod.

Its subcellular location is the periplasm. It localises to the bacterial flagellum basal body. Assembles around the rod to form the L-ring and probably protects the motor/basal body from shearing forces during rotation. In Pseudomonas fluorescens (strain ATCC BAA-477 / NRRL B-23932 / Pf-5), this protein is Flagellar P-ring protein.